Consider the following 76-residue polypeptide: Small ribosomal subunit protein bS18 (76 aa).

It belongs to the bacterial ribosomal protein bS18 family. Part of the 30S ribosomal subunit. Forms a tight heterodimer with protein bS6.

Functionally, binds as a heterodimer with protein bS6 to the central domain of the 16S rRNA, where it helps stabilize the platform of the 30S subunit. The protein is Small ribosomal subunit protein bS18 of Nitrosomonas europaea (strain ATCC 19718 / CIP 103999 / KCTC 2705 / NBRC 14298).